Consider the following 284-residue polypeptide: Undecaprenyl-diphosphatase (284 aa).

The next 8 helical transmembrane spans lie at 7 to 27 (IILG…TGHL), 44 to 64 (EMFD…LYFH), 90 to 110 (LWLK…PLND), 116 to 136 (FYHF…FIVI), 167 to 187 (VLSL…ALLV), 197 to 217 (FTFF…ILHF), 229 to 249 (FGVL…AIKF), and 259 to 279 (FTFF…YAMF).

This sequence belongs to the UppP family.

It is found in the cell membrane. It carries out the reaction di-trans,octa-cis-undecaprenyl diphosphate + H2O = di-trans,octa-cis-undecaprenyl phosphate + phosphate + H(+). Functionally, catalyzes the dephosphorylation of undecaprenyl diphosphate (UPP). Confers resistance to bacitracin. The protein is Undecaprenyl-diphosphatase of Lactococcus lactis subsp. lactis (strain IL1403) (Streptococcus lactis).